Consider the following 317-residue polypeptide: Small ribosomal subunit protein uS2 (317 aa).

Residue Ser-2 is modified to N-acetylserine. Laminin-binding regions lie at residues 161-180 (IPCNNKGPHSVGLMWWMLAR) and 205-229 (RDPEEIEKEEQAAAEKAVGKEEFQG). [DE]-W-[ST] repeat units lie at residues 230 to 232 (EWS), 245 to 247 (DWS), 288 to 290 (DWS), 297 to 299 (DWS), and 315 to 317 (EWS). The laminin-binding stretch occupies residues 242–317 (EVPDWSEGVQ…DWGGSTAEWS (76 aa)). The interval 278-317 (PGPTTEGYSEDWSAQPATEDWSAAPTAQAGDWGGSTAEWS) is disordered.

This sequence belongs to the universal ribosomal protein uS2 family. As to quaternary structure, monomer (37LRP) and homodimer (67LR). Component of the small ribosomal subunit. Mature ribosomes consist of a small (40S) and a large (60S) subunit. The 40S subunit contains about 33 different proteins and 1 molecule of RNA (18S). The 60S subunit contains about 49 different proteins and 3 molecules of RNA (28S, 5.8S and 5S). Interacts with rps21. Interacts with several laminins including at least lamb1. Interacts with mdk. Acylated. Acylation may be a prerequisite for conversion of the monomeric 37 kDa laminin receptor precursor (37LRP) to the mature dimeric 67 kDa laminin receptor (67LR), and may provide a mechanism for membrane association. Post-translationally, cleaved by stromelysin-3 (ST3) at the cell surface. Cleavage by stromelysin-3 may be a mechanism to alter cell-extracellular matrix interactions.

The protein resides in the cell membrane. It is found in the cytoplasm. It localises to the nucleus. Functionally, required for the assembly and/or stability of the 40S ribosomal subunit. Required for the processing of the 20S rRNA-precursor to mature 18S rRNA in a late step of the maturation of 40S ribosomal subunits. Also functions as a cell surface receptor for laminin. Plays a role in cell adhesion to the basement membrane and in the consequent activation of signaling transduction pathways. May play a role in cell fate determination and tissue morphogenesis. The protein is Small ribosomal subunit protein uS2 (rpsa) of Ictalurus punctatus (Channel catfish).